The sequence spans 541 residues: uncharacterized protein (541 aa).

A signal peptide spans 1-22 (MQFKYGALIFSGFLGLSIVLAS). Cysteine 23 carries the N-palmitoyl cysteine lipid modification. The S-diacylglycerol cysteine moiety is linked to residue cysteine 23. 2 disordered regions span residues 446–468 (APGQ…NGNL) and 480–514 (KTKT…TENQ). Over residues 448–460 (GQSSQKEGGQQQS) the composition is skewed to low complexity. The span at 480–490 (KTKTEVKKTED) shows a compositional bias: basic and acidic residues.

It belongs to the MG185/MG260 family.

The protein localises to the cell membrane. This is an uncharacterized protein from Mycoplasma pneumoniae (strain ATCC 29342 / M129 / Subtype 1) (Mycoplasmoides pneumoniae).